A 634-amino-acid chain; its full sequence is DNA-directed RNA polymerase subunit gamma (634 aa).

The Zn(2+) site is built by Cys74, Cys76, Cys89, and Cys92. Positions 471, 473, and 475 each coordinate Mg(2+).

The protein belongs to the RNA polymerase beta' chain family. RpoC1 subfamily. In cyanobacteria the RNAP catalytic core is composed of 2 alpha, 1 beta, 1 beta', 1 gamma and 1 omega subunit. When a sigma factor is associated with the core the holoenzyme is formed, which can initiate transcription. Mg(2+) serves as cofactor. Zn(2+) is required as a cofactor.

The catalysed reaction is RNA(n) + a ribonucleoside 5'-triphosphate = RNA(n+1) + diphosphate. Functionally, DNA-dependent RNA polymerase catalyzes the transcription of DNA into RNA using the four ribonucleoside triphosphates as substrates. The chain is DNA-directed RNA polymerase subunit gamma from Prochlorococcus marinus (strain AS9601).